The chain runs to 178 residues: GTP-dependent dephospho-CoA kinase (178 aa).

The GTP site is built by Asp55, Val57, Asp74, Lys76, and Glu127.

Belongs to the GTP-dependent DPCK family.

The enzyme catalyses 3'-dephospho-CoA + GTP = GDP + CoA + H(+). The protein operates within cofactor biosynthesis; coenzyme A biosynthesis. In terms of biological role, catalyzes the GTP-dependent phosphorylation of the 3'-hydroxyl group of dephosphocoenzyme A to form coenzyme A (CoA). The polypeptide is GTP-dependent dephospho-CoA kinase (Saccharolobus islandicus (strain Y.N.15.51 / Yellowstone #2) (Sulfolobus islandicus)).